An 833-amino-acid polypeptide reads, in one-letter code: Major vault protein (833 aa).

MVP repeat units follow at residues Arg-54–Pro-118, Pro-119–Tyr-170, Pro-171–Ser-223, Asp-224–Ser-278, Lys-280–Gly-328, Lys-329–Asp-380, and Lys-381–Thr-433.

As to quaternary structure, the vault ribonucleoprotein particle is a huge (400 A x 670 A) cage structure of 12.9 MDa. It consists of a dimer of half-vaults, with each half-vault comprising 39 identical major vault protein (MVP) chains, PARP4 and one or more vault RNAs (vRNAs).

It is found in the cytoplasm. The protein localises to the nucleus. In terms of biological role, required for normal vault structure. Vaults are multi-subunit structures that may act as scaffolds for proteins involved in signal transduction. Vaults may also play a role in nucleo-cytoplasmic transport. The chain is Major vault protein from Leishmania infantum.